We begin with the raw amino-acid sequence, 1102 residues long: Trafficking protein particle complex II-specific subunit 130 (1102 aa).

It belongs to the TMEM1 family. In terms of assembly, part of the multisubunit TRAPP (transport protein particle) II complex composed of BET3, BET5, TRS20, TRS23, TRS31, TRS33, TRS65, TRS120 and TRS130. Interacts with YPT31 and YPT32.

It localises to the golgi apparatus. In terms of biological role, specific subunit of the TRAPP II complex, a highly conserved vesicle tethering complex that functions in the late Golgi as a guanine nucleotide exchange factor (GEF) for the Golgi YPT1 GTPase. TRS130 plays a role in the YPT GEF activity of TRAPP II in concert with the two other TRAPP II-specific subunits TRS65 and TRS120. Required for both the cytoplasm-to-vacuole targeting (Cvt) pathway and starvation-induced autophagy through its role in ATG8 and ATG9 trafficking. The protein is Trafficking protein particle complex II-specific subunit 130 (TRS130) of Saccharomyces cerevisiae (strain ATCC 204508 / S288c) (Baker's yeast).